Here is a 556-residue protein sequence, read N- to C-terminus: Transcription factor IIIB 70 kDa subunit (556 aa).

Residues 8–41 form a TFIIB-type zinc finger; the sequence is SSRKCKNCGSTDFVRDISNTTNELICKVCGLVTE. Cys12, Cys15, Cys33, and Cys36 together coordinate Zn(2+). Tandem repeats lie at residues 98–174 and 193–272. The tract at residues 98-272 is interaction with TBP and with the Pol III subunit C34; that stretch reads LKAVSYALNI…EETLQQRLNE (175 aa). The tract at residues 284–556 is interaction with TBP; sequence KEFRDDETEV…DAINGLFGQK (273 aa). Disordered stretches follow at residues 287–309 and 477–501; these read RDDETEVNEGERSAESKPPSFDK and ADLASGNTSLRKKRSKRTNRNQSSA. Residues 295-309 show a composition bias toward basic and acidic residues; the sequence is EGERSAESKPPSFDK. Basic residues predominate over residues 486-495; that stretch reads LRKKRSKRTN.

Belongs to the TFIIB family. TFIIIB comprises the TATA-binding protein (TBP), the B-related factor (BRF) and a 70 kDa polypeptide.

Its subcellular location is the nucleus. Its function is as follows. General activator of RNA polymerase III transcription. Interacts with TBP. Binds to Pol III subunit C34 and to the TAU135 component of TFIIIC. The polypeptide is Transcription factor IIIB 70 kDa subunit (TDS4) (Kluyveromyces lactis (strain ATCC 8585 / CBS 2359 / DSM 70799 / NBRC 1267 / NRRL Y-1140 / WM37) (Yeast)).